We begin with the raw amino-acid sequence, 129 residues long: GEL complex subunit OPTI (129 aa).

The Cytoplasmic portion of the chain corresponds to 1-44 (MSGGRRKEEPPQPQLANGALKVSVWSKVLRSDAAWDDKDEFLDV). Residues 45 to 65 (IYWFRQIIALVLGVIWGVLPL) traverse the membrane as a helical segment. A topological domain (lumenal) is located at residue Arg66. The helical transmembrane segment at 67 to 84 (GFLGIAGFCLINAGVLYL) threads the bilayer. Residues 85-103 (YFSNYLQIDEEEYGGTWEL) lie on the Cytoplasmic side of the membrane. A helical transmembrane segment spans residues 104–127 (TKEGFMTSFALFMVIWIIFYTAIH). Residues 128–129 (YD) are Lumenal-facing.

Belongs to the EMC6 family. In terms of assembly, component of the GET- and EMC-like (GEL) complex, composed of RAB5IF/OPTI and TMCO1. The GEL complex is part of the multi-pass translocon (MPT) complex, composed of three subcomplexes, the GEL complex (composed of RAB5IF/OPTI and TMCO1), the BOS complex (composed of NCLN/Nicalin, NOMO1 and TMEM147) and the PAT complex (composed of WDR83OS/Asterix and CCDC47). The MPT complex associates with the SEC61 complex. Interacts with NDUFS3, NDUFA4, NDUFV1, NDUFA9 and NDUFS8 of the mitochondrial membrane respiratory chain NADH dehydrogenase (Complex I). Interacts with UQCRC2 of the ubiquinol-cytochrome c reductase complex (Complex III). Interacts with COX5A and COX7C of the cytochrome c oxidase complex (Complex IV). In terms of tissue distribution, expressed in neuronal cells.

Its subcellular location is the endoplasmic reticulum membrane. The protein localises to the mitochondrion inner membrane. In terms of biological role, component of the multi-pass translocon (MPT) complex that mediates insertion of multi-pass membrane proteins into the lipid bilayer of membranes. The MPT complex takes over after the SEC61 complex: following membrane insertion of the first few transmembrane segments of proteins by the SEC61 complex, the MPT complex occludes the lateral gate of the SEC61 complex to promote insertion of subsequent transmembrane regions. Within the MPT complex, the GEL subcomplex may mediate insertion of transmembrane regions into the membrane. In addition to its role in multi-pass membrane insertion, RAB5IF/OPTI also acts as an assembly factor for mitochondrial respiratory complexes. This chain is GEL complex subunit OPTI, found in Mus musculus (Mouse).